The primary structure comprises 495 residues: Cardiolipin synthase A (495 aa).

A run of 2 helical transmembrane segments spans residues 9-29 (IEVL…WLIT) and 46-66 (MAWL…YLLL). PLD phosphodiesterase domains follow at residues 227–254 (MDLR…IDPK) and 408–435 (EGGL…DMRS). Residues histidine 232, lysine 234, aspartate 239, histidine 413, lysine 415, and aspartate 420 contribute to the active site.

This sequence belongs to the phospholipase D family. Cardiolipin synthase subfamily. ClsA sub-subfamily.

Its subcellular location is the cell membrane. The catalysed reaction is 2 a 1,2-diacyl-sn-glycero-3-phospho-(1'-sn-glycerol) = a cardiolipin + glycerol. In terms of biological role, catalyzes the reversible phosphatidyl group transfer from one phosphatidylglycerol molecule to another to form cardiolipin (CL) (diphosphatidylglycerol) and glycerol. The sequence is that of Cardiolipin synthase A from Wigglesworthia glossinidia brevipalpis.